A 327-amino-acid chain; its full sequence is Sphingomyelinase D (327 aa).

The signal sequence occupies residues 1–23 (MQPLTRTICALFCLLLTLPLTFG). Histidine 52 is an active-site residue. 3 residues coordinate Mg(2+): glutamate 72, aspartate 74, and aspartate 117. The SMD-tail motif lies at 320-327 (VTGADKLW).

It belongs to the sphingomyelinase D/phospholipase D family. Mg(2+) is required as a cofactor.

It is found in the secreted. It carries out the reaction a sphingomyelin + H2O = an N-acylsphing-4-enine 1-phosphate + choline + H(+). In terms of biological role, catalyzes the hydrolysis of sphingomyelin. Sphingomyelinases D are produced by some spider in their venoms, but also by arthropods such as ticks, or pathogenic bacteria and fungi. They might play a role in pathogenicity through different mechanisms, such as membrane destabilization and host cell penetration, but also pulmonary inflammation and cutaneous lesions. The sequence is that of Sphingomyelinase D from Paracoccidioides brasiliensis (strain Pb03).